Here is a 192-residue protein sequence, read N- to C-terminus: Probable cobalt-precorrin-6B C(15)-methyltransferase (decarboxylating) (192 aa).

Residues Thr-17, 41–45 (GCGTG), Asp-62, and Ala-91 contribute to the S-adenosyl-L-methionine site.

The protein belongs to the methyltransferase superfamily. Archaeal-type CbiT family. As to quaternary structure, homotetramer.

The catalysed reaction is Co-precorrin-6B + S-adenosyl-L-methionine = Co-precorrin-7 + S-adenosyl-L-homocysteine + CO2. Its pathway is cofactor biosynthesis; adenosylcobalamin biosynthesis; cob(II)yrinate a,c-diamide from sirohydrochlorin (anaerobic route): step 8/10. Catalyzes the methylation of C-15 in cobalt-precorrin-6B followed by the decarboxylation of C-12 to form cobalt-precorrin-7. The sequence is that of Probable cobalt-precorrin-6B C(15)-methyltransferase (decarboxylating) from Methanothermobacter thermautotrophicus (strain ATCC 29096 / DSM 1053 / JCM 10044 / NBRC 100330 / Delta H) (Methanobacterium thermoautotrophicum).